Here is a 393-residue protein sequence, read N- to C-terminus: Lipoyl synthase, mitochondrial (393 aa).

Positions 111, 116, 122, 142, 146, 149, and 357 each coordinate [4Fe-4S] cluster. Residues 127 to 346 (EHGTQTATIM…ETRGNELGFL (220 aa)) form the Radical SAM core domain.

Belongs to the radical SAM superfamily. Lipoyl synthase family. Requires [4Fe-4S] cluster as cofactor.

It is found in the mitochondrion. It catalyses the reaction [[Fe-S] cluster scaffold protein carrying a second [4Fe-4S](2+) cluster] + N(6)-octanoyl-L-lysyl-[protein] + 2 oxidized [2Fe-2S]-[ferredoxin] + 2 S-adenosyl-L-methionine + 4 H(+) = [[Fe-S] cluster scaffold protein] + N(6)-[(R)-dihydrolipoyl]-L-lysyl-[protein] + 4 Fe(3+) + 2 hydrogen sulfide + 2 5'-deoxyadenosine + 2 L-methionine + 2 reduced [2Fe-2S]-[ferredoxin]. The protein operates within protein modification; protein lipoylation via endogenous pathway; protein N(6)-(lipoyl)lysine from octanoyl-[acyl-carrier-protein]: step 2/2. Its function is as follows. Catalyzes the radical-mediated insertion of two sulfur atoms into the C-6 and C-8 positions of the octanoyl moiety bound to the lipoyl domains of lipoate-dependent enzymes, thereby converting the octanoylated domains into lipoylated derivatives. In Aedes aegypti (Yellowfever mosquito), this protein is Lipoyl synthase, mitochondrial.